The sequence spans 117 residues: Probable non-functional immunoglobulin heavy variable 3-16 (117 aa).

An N-terminal signal peptide occupies residues M1–C19. The interval E20–S44 is framework-1. The Ig-like domain occupies V21–R117. A disulfide bridge links C41 with C115. Residues G45–D52 are complementarity-determining-1. The interval M53–G69 is framework-2. Positions V70–T77 are complementarity-determining-2. An N-linked (GlcNAc...) asparagine glycan is attached at N73. Residues H78 to C115 form a framework-3 region. Residues V116 to R117 form a complementarity-determining-3 region.

In terms of assembly, immunoglobulins are composed of two identical heavy chains and two identical light chains; disulfide-linked.

It is found in the secreted. It localises to the cell membrane. In terms of biological role, probable non-functional open reading frame (ORF) of V region of the variable domain of immunoglobulin heavy chains. Non-functional ORF generally cannot participate in the synthesis of a productive immunoglobulin chain due to altered V-(D)-J or switch recombination and/or splicing site (at mRNA level) and/or conserved amino acid change (protein level). Immunoglobulins, also known as antibodies, are membrane-bound or secreted glycoproteins produced by B lymphocytes. In the recognition phase of humoral immunity, the membrane-bound immunoglobulins serve as receptors which, upon binding of a specific antigen, trigger the clonal expansion and differentiation of B lymphocytes into immunoglobulins-secreting plasma cells. Secreted immunoglobulins mediate the effector phase of humoral immunity, which results in the elimination of bound antigens. The antigen binding site is formed by the variable domain of one heavy chain, together with that of its associated light chain. Thus, each immunoglobulin has two antigen binding sites with remarkable affinity for a particular antigen. The variable domains are assembled by a process called V-(D)-J rearrangement and can then be subjected to somatic hypermutations which, after exposure to antigen and selection, allow affinity maturation for a particular antigen. This is Probable non-functional immunoglobulin heavy variable 3-16 from Homo sapiens (Human).